Consider the following 1662-residue polypeptide: ABC transporter A family member 5 (1662 aa).

Helical transmembrane passes span 30–50, 242–262, 284–304, 317–337, 346–366, 377–397, and 417–437; these read IVFPIIIVLLVFAILVLVQLF, SVFVSAALLIFTFRLVTELVV, ISWIITSLVTALPIDLIIIVI, IIVIVTLILYLLTLQLLAFIF, FAGLLTFLTILLINICGIFIG, LLLCCIFSPIGIACSFYIMSI, and QIIGTFVFNIIFYTFLIWYLD. Positions 505-739 constitute an ABC transporter 1 domain; it reads ISIRNLRKEF…YGVGYLLTCS (235 aa). 541–548 is an ATP binding site; sequence GPNGSGKS. Transmembrane regions (helical) follow at residues 872 to 892, 1052 to 1072, 1102 to 1122, 1130 to 1150, 1163 to 1183, 1201 to 1221, and 1246 to 1266; these read FKAFLLSLLLPLLVIIGSIIV, IVYFIVIMMAGFSLMAGSFAG, LWDYFFAFILLLITCIILAIV, FGLFFLSLVLFSLSIIPLSYL, GAITAIHFSIGVIMTIAMIIL, IIDIVFNILSPLYAFSRVIFI, and STPIIILSVHVVVWTIFILLI. One can recognise an ABC transporter 2 domain in the interval 1322-1557; sequence LQYKGLHKLF…FGAGYSVEVK (236 aa). Residue 1360-1367 coordinates ATP; it reads GLNGAGKT.

It belongs to the ABC transporter superfamily. ABCA family.

Its subcellular location is the membrane. This Dictyostelium discoideum (Social amoeba) protein is ABC transporter A family member 5 (abcA5).